The sequence spans 250 residues: Thiamine thiazole synthase (250 aa).

NAD(+)-binding positions include S36, 55–56, G63, V126, and 152–154; these read EE and HVD. 2 residues coordinate Fe cation: D154 and H169. M216 is a binding site for NAD(+). Position 226 (R226) interacts with glycine.

The protein belongs to the THI4 family. As to quaternary structure, homooctamer; tetramer of dimers. Fe(2+) serves as cofactor.

It carries out the reaction hydrogen sulfide + glycine + NAD(+) = ADP-5-ethyl-4-methylthiazole-2-carboxylate + nicotinamide + 3 H2O + H(+). It functions in the pathway cofactor biosynthesis; thiamine diphosphate biosynthesis. Involved in the biosynthesis of the thiazole moiety of thiamine. Catalyzes the conversion of NAD and glycine to adenosine diphosphate 5-(2-hydroxyethyl)-4-methylthiazole-2-carboxylate (ADT), an adenylated thiazole intermediate, using free sulfide as a source of sulfur. The polypeptide is Thiamine thiazole synthase (Thermotoga maritima (strain ATCC 43589 / DSM 3109 / JCM 10099 / NBRC 100826 / MSB8)).